We begin with the raw amino-acid sequence, 30 residues long: Uperin-6.2 (30 aa).

As to expression, expressed by the skin dorsal glands.

Its subcellular location is the secreted. This is Uperin-6.2 from Uperoleia inundata (Floodplain toadlet).